Consider the following 116-residue polypeptide: Large ribosomal subunit protein bL20 (116 aa).

The protein belongs to the bacterial ribosomal protein bL20 family.

Its function is as follows. Binds directly to 23S ribosomal RNA and is necessary for the in vitro assembly process of the 50S ribosomal subunit. It is not involved in the protein synthesizing functions of that subunit. This Hydrogenobaculum sp. (strain Y04AAS1) protein is Large ribosomal subunit protein bL20.